A 178-amino-acid polypeptide reads, in one-letter code: Probetacellulin (178 aa).

The N-terminal stretch at 1–31 is a signal peptide; it reads MARAAPGSGASPLPLLPALALGLVILHCVVA. At 32–118 the chain is on the extracellular side; it reads DGNSTRSPED…LFYLRGDRGQ (87 aa). N-linked (GlcNAc...) asparagine glycosylation occurs at N34. The EGF-like domain maps to 65-105; the sequence is HFSRCPKQYKHYCIKGRCRFVVAEQTPSCVCDEGYAGARCE. Disulfide bonds link C69–C82, C77–C93, and C95–C104. The propeptide at 112–178 is removed in mature form; sequence LRGDRGQILV…NDDIQETSIA (67 aa). The helical transmembrane segment at 119-139 threads the bilayer; that stretch reads ILVICLIAVMVIFIILVVSIC. Over 140-178 the chain is Cytoplasmic; the sequence is TCCHPLRKRRKRRKKEEEMETLGKDITPINDDIQETSIA.

Monomer. Interacts with EGFR and ERBB4. In terms of tissue distribution, expressed in a wide range of tissues, including the mammary gland.

The protein resides in the secreted. The protein localises to the extracellular space. Its subcellular location is the cell membrane. Its function is as follows. Growth factor that binds to EGFR, ERBB4 and other EGF receptor family members. Potent mitogen for retinal pigment epithelial cells and vascular smooth muscle cells. This is Probetacellulin (BTC) from Bos taurus (Bovine).